Reading from the N-terminus, the 383-residue chain is Succinyl-diaminopimelate desuccinylase (383 aa).

Residue H69 participates in Zn(2+) binding. D71 is an active-site residue. D103 is a Zn(2+) binding site. E137 serves as the catalytic Proton acceptor. Zn(2+)-binding residues include E138, E166, and H357.

It belongs to the peptidase M20A family. DapE subfamily. Homodimer. Requires Zn(2+) as cofactor. The cofactor is Co(2+).

The catalysed reaction is N-succinyl-(2S,6S)-2,6-diaminopimelate + H2O = (2S,6S)-2,6-diaminopimelate + succinate. It participates in amino-acid biosynthesis; L-lysine biosynthesis via DAP pathway; LL-2,6-diaminopimelate from (S)-tetrahydrodipicolinate (succinylase route): step 3/3. Functionally, catalyzes the hydrolysis of N-succinyl-L,L-diaminopimelic acid (SDAP), forming succinate and LL-2,6-diaminopimelate (DAP), an intermediate involved in the bacterial biosynthesis of lysine and meso-diaminopimelic acid, an essential component of bacterial cell walls. The protein is Succinyl-diaminopimelate desuccinylase of Rickettsia prowazekii (strain Madrid E).